Here is a 252-residue protein sequence, read N- to C-terminus: SPbeta prophage-derived uncharacterized protein YomH (252 aa).

In Bacillus subtilis (strain 168), this protein is SPbeta prophage-derived uncharacterized protein YomH (yomH).